Consider the following 262-residue polypeptide: 5'-nucleotidase SurE (262 aa).

A divalent metal cation contacts are provided by D11, D12, S43, and N101.

This sequence belongs to the SurE nucleotidase family. A divalent metal cation is required as a cofactor.

The protein localises to the cytoplasm. It catalyses the reaction a ribonucleoside 5'-phosphate + H2O = a ribonucleoside + phosphate. Nucleotidase that shows phosphatase activity on nucleoside 5'-monophosphates. This Prochlorococcus marinus (strain NATL1A) protein is 5'-nucleotidase SurE.